Consider the following 232-residue polypeptide: Putative homeobox protein NANOG2 (232 aa).

The segment at 1–39 (MDLPIQDSHDSSTSPKGKQPTTAEKSATKKEDKVPVKKQ) is disordered. Polar residues predominate over residues 11–25 (SSTSPKGKQPTTAEK). A compositionally biased stretch (basic and acidic residues) spans 26–35 (SATKKEDKVP). A run of 8 repeats spans residues 123–127 (WSNQT), 128–132 (WNNST), 133–137 (WSNQT), 143–147 (WSNHS), 148–152 (WNTQT), 153–157 (WCTQS), 158–162 (WNNQA), and 163–167 (WNSPF). The tract at residues 123-167 (WSNQTWNNSTWSNQTQNIQSWSNHSWNTQTWCTQSWNNQAWNSPF) is 8 X repeats starting with a Trp in each unit. The segment at 123–167 (WSNQTWNNSTWSNQTQNIQSWSNHSWNTQTWCTQSWNNQAWNSPF) is sufficient for transactivation activity. A sufficient for strong transactivation activity region spans residues 168 to 232 (YNCGEESLQS…YSMNMQPEDV (65 aa)).

This sequence belongs to the Nanog homeobox family.

It localises to the nucleus. Its function is as follows. Probable transcriptional regulator. The polypeptide is Putative homeobox protein NANOG2 (NANOGP1) (Homo sapiens (Human)).